A 295-amino-acid polypeptide reads, in one-letter code: Tyrosine recombinase XerC (295 aa).

The Core-binding (CB) domain maps to 1 to 85; it reads MLTALNRYWD…ALRRFLSFLV (85 aa). One can recognise a Tyr recombinase domain in the interval 106 to 285; that stretch reads HLPKNMDGEQ…NFQHLAEVYD (180 aa). Residues Arg-145, Lys-169, His-237, Arg-240, and His-263 contribute to the active site. Tyr-272 acts as the O-(3'-phospho-DNA)-tyrosine intermediate in catalysis.

Belongs to the 'phage' integrase family. XerC subfamily. As to quaternary structure, forms a cyclic heterotetrameric complex composed of two molecules of XerC and two molecules of XerD.

Its subcellular location is the cytoplasm. In terms of biological role, site-specific tyrosine recombinase, which acts by catalyzing the cutting and rejoining of the recombining DNA molecules. The XerC-XerD complex is essential to convert dimers of the bacterial chromosome into monomers to permit their segregation at cell division. It also contributes to the segregational stability of plasmids. This Haemophilus influenzae (strain 86-028NP) protein is Tyrosine recombinase XerC.